Here is a 240-residue protein sequence, read N- to C-terminus: Insulin-like growth factor-binding protein 3 receptor (240 aa).

A signal peptide spans 1 to 38; that stretch reads MGSCQAGHNLHLCLAHHPPLVCATLILLLLGLSGLGLG. The Extracellular portion of the chain corresponds to 39-204; it reads GFLLTHTTGL…SEELALCGSR (166 aa). Asparagine 167 carries N-linked (GlcNAc...) asparagine glycosylation. Residues 205–225 form a helical membrane-spanning segment; the sequence is VLGLGFFLVLLCGLLCCTTAV. The Cytoplasmic portion of the chain corresponds to 226–240; the sequence is CFHPRPEFHWSRTRL.

As to quaternary structure, interacts with IGFBP3. Interacts with CASP8.

It is found in the cell membrane. Its function is as follows. Cell death receptor specific for IGFBP3, may mediate caspase-8-dependent apoptosis upon ligand binding. The polypeptide is Insulin-like growth factor-binding protein 3 receptor (Tmem219) (Mus musculus (Mouse)).